A 553-amino-acid polypeptide reads, in one-letter code: Heterochromatin protein 1-binding protein 3 (553 aa).

Residue Ala-2 is modified to N-acetylalanine. The residue at position 6 (Ser-6) is a Phosphoserine. The disordered stretch occupies residues 30 to 131 (LGEKADDSTM…SKEKEKKVKK (102 aa)). Phosphothreonine is present on Thr-51. The segment covering 60–71 (GEEEKPEPDGSS) has biased composition (acidic residues). A Glycyl lysine isopeptide (Lys-Gly) (interchain with G-Cter in SUMO2) cross-link involves residue Lys-64. Residue Thr-85 is modified to Phosphothreonine. The span at 91-127 (REAEQPKGEPESGEKEESKSAEETKKEEKDQSKEKEK) shows a compositional bias: basic and acidic residues. Residue Lys-97 forms a Glycyl lysine isopeptide (Lys-Gly) (interchain with G-Cter in SUMO2) linkage. Phosphoserine is present on residues Ser-142, Ser-155, and Ser-156. In terms of domain architecture, H15 1 spans 157 to 232 (PRPKMDAILT…GASGSFVVVQ (76 aa)). N6-acetyllysine is present on Lys-190. The segment at 231–251 (VQKSKTPQKSKNRKKGSAVDP) is disordered. The segment covering 236–246 (TPQKSKNRKKG) has biased composition (basic residues). Ser-247 is subject to Phosphoserine. The PxVxL motif motif lies at 253–257 (PQVKL). H15 domains are found at residues 253-328 (PQVK…QLKK) and 335-411 (LGGS…QLCF). Residue Lys-256 forms a Glycyl lysine isopeptide (Lys-Gly) (interchain with G-Cter in SUMO2) linkage. Residues 422–553 (PKKVSDGSED…MKKKSFKTKK (132 aa)) are disordered. Residues 428 to 449 (GSEDEDEEEDEEESSEDSEDEE) show a composition bias toward acidic residues. A phosphoserine mark is found at Ser-441, Ser-442, and Ser-445. Basic residues-rich tracts occupy residues 488–509 (GKVR…RKGR) and 542–553 (SAMKKKSFKTKK).

Interacts (via PxVxL motif) with CBX5.

The protein localises to the nucleus. It is found in the chromosome. Functionally, component of heterochromatin that maintains heterochromatin integrity during G1/S progression and regulates the duration of G1 phase to critically influence cell proliferative capacity. May play a role in hypoxia-induced oncogenesis. This chain is Heterochromatin protein 1-binding protein 3 (Hp1bp3), found in Rattus norvegicus (Rat).